A 151-amino-acid chain; its full sequence is tRNA-specific adenosine deaminase (151 aa).

The 119-residue stretch at 4-122 (NRDSYWMKIA…PFLKKIFINL (119 aa)) folds into the CMP/dCMP-type deaminase domain. Residue H55 participates in Zn(2+) binding. E57 acts as the Proton donor in catalysis. Positions 85 and 88 each coordinate Zn(2+).

Belongs to the cytidine and deoxycytidylate deaminase family. In terms of assembly, homodimer. Zn(2+) is required as a cofactor.

The enzyme catalyses adenosine(34) in tRNA + H2O + H(+) = inosine(34) in tRNA + NH4(+). Catalyzes the deamination of adenosine to inosine at the wobble position 34 of tRNA(Arg2). This is tRNA-specific adenosine deaminase from Buchnera aphidicola subsp. Schizaphis graminum (strain Sg).